A 230-amino-acid chain; its full sequence is Transmembrane protein 225 (230 aa).

Topologically, residues 1–8 (MMHIPNRS) are cytoplasmic. A helical membrane pass occupies residues 9 to 29 (IQAANIFFSSGAILLLIVGLI). At 30-71 (MEDWVELIPKVRKDKTTHSPWLGCCPPFWPEESLEVVRRIMR) the chain is on the extracellular side. A helical transmembrane segment spans residues 72-92 (MTLNISIYLNLIIGLQFSYMI). The Cytoplasmic portion of the chain corresponds to 93–99 (SQNKCVH). A helical transmembrane segment spans residues 100 to 120 (LLVGFLSFFAGCLLFYAIIVY). Topologically, residues 121–139 (HHKLNKGQYVYFVNYKTKW) are extracellular. Residues 140–160 (IAFTVYLTIALFLTCGIFCFI) form a helical membrane-spanning segment. Residues 161–230 (QSTNRCECMK…TQARRVTWAL (70 aa)) are Cytoplasmic-facing. Positions 224 to 228 (RRVTW) match the RVxF motif.

As to quaternary structure, interacts (via RVxF motif) with PPP1CC. As to expression, expressed in testis, epididymis and spermatozoa (at protein level). Not expressed in brain, heart, lung, liver, spleen, kidney and skeletal muscle.

The protein resides in the cytoplasmic vesicle. Its subcellular location is the secretory vesicle. The protein localises to the acrosome membrane. Functionally, probably inhibits protein phosphatase 1 (PP1) in sperm via binding to catalytic subunit PPP1CC. This Mus musculus (Mouse) protein is Transmembrane protein 225 (Tmem225).